Consider the following 541-residue polypeptide: MLSPQRTAAVASRGAGDAMENGKPGPVQVVLVHKEQHSFELEERALASVLLQDHIRDLDVVVVSVAGAFRKGKSFILDFMLRYLYSQKEGGHSDWLGDPEEPLTGFSWRGGSDPETTGIQIWSEVFTVKKPCGKKVAVVLMDTQGAFDSQSTVKDCATIFALSTMTSSVQIYNLSQNIQEDDLQQLQLFTEYGRLAMDEIFQKPFQTLMFLIRDWSFPYEYNYGLQGGMAFLDKRLHVKEHQHEEIQNVRNHIHSCFSDVTCFLLPHPGLQVATSPNFDGKLKDIASEFKEQLQALIPYVLNPSKLMEKEINGSKVTCRGLLEYFKAYIKIYQGEDLPHPKSMLQATAEANNLAAAASAKDIYYNNMEEICGGEKPYLSPDILEEKHLEFKQLALDHFKKIKKMGGKDFSFRYQQELEEEIKELYENFCKHNGSKNVFSTFRTPAVLFTGIAALYIASGFTGFIGLEVVAQLFNCMVGLLLIALLTWGYIRYSGQYRELGGAIDSGAAYVLEQASSHIGNSTQAAVRDAVVGRPPADKKSQ.

The disordered stretch occupies residues 1 to 22 (MLSPQRTAAVASRGAGDAMENG). The tract at residues 1-25 (MLSPQRTAAVASRGAGDAMENGKPG) is N-terminal hypervariable region (HVR). Residues 1 to 445 (MLSPQRTAAV…NVFSTFRTPA (445 aa)) are Cytoplasmic-facing. One can recognise a GB1/RHD3-type G domain in the interval 57–305 (DLDVVVVSVA…LIPYVLNPSK (249 aa)). Arg70, Lys71, Gly72, Lys73, Ser74, Phe75, and Arg109 together coordinate GDP. Residue Asp142 coordinates Mg(2+). GDP-binding residues include Arg213, Asp214, Val272, and Ser275. The tract at residues 343-434 (MLQATAEANN…YENFCKHNGS (92 aa)) is 3HB (three-helix bundle) domain. Lys391 carries the post-translational modification N6-acetyllysine. The helical transmembrane segment at 446 to 466 (VLFTGIAALYIASGFTGFIGL) threads the bilayer. Position 467 (Glu467) is a topological domain, lumenal. The chain crosses the membrane as a helical span at residues 468-488 (VVAQLFNCMVGLLLIALLTWG). The Cytoplasmic segment spans residues 489-541 (YIRYSGQYRELGGAIDSGAAYVLEQASSHIGNSTQAAVRDAVVGRPPADKKSQ).

It belongs to the TRAFAC class dynamin-like GTPase superfamily. GB1/RHD3 GTPase family. GB1 subfamily. As to quaternary structure, monomeric and homodimeric. The homodimer, transiently formed by two molecules on opposing membranes, is the active form mediating ER membrane fusion. Interacts with ZFYVE27; both proteins are involved in endoplasmic reticulum tubular network organization. Interacts with REEP5; both proteins are involved in endoplasmic reticulum tubular network organization. In terms of tissue distribution, expressed in cardiomyocytes (at protein level).

The protein localises to the endoplasmic reticulum membrane. The enzyme catalyses GTP + H2O = GDP + phosphate + H(+). Functionally, atlastin-3 (ATL3) is a membrane-anchored GTPase that mediates the GTP-dependent fusion of endoplasmic reticulum (ER) membranes, maintaining the continuous ER network. It facilitates the formation of three-way junctions where ER tubules intersect. Two atlastin-3 on neighboring ER tubules bind GTP and form loose homodimers through the GB1/RHD3-type G domains and 3HB regions. Upon GTP hydrolysis, the 3HB regions tighten, pulling the membranes together to drive their fusion. After fusion, the homodimer disassembles upon release of inorganic phosphate (Pi). Subsequently, GDP dissociates, resetting the monomers to a conformation ready for a new fusion cycle. The polypeptide is Atlastin-3 (Mus musculus (Mouse)).